Reading from the N-terminus, the 331-residue chain is RNA 3'-terminal phosphate cyclase (331 aa).

ATP-binding positions include glutamine 100 and 276 to 280 (HLADQ). The Tele-AMP-histidine intermediate role is filled by histidine 301.

The protein belongs to the RNA 3'-terminal cyclase family. Type 1 subfamily.

Its subcellular location is the cytoplasm. The enzyme catalyses a 3'-end 3'-phospho-ribonucleotide-RNA + ATP = a 3'-end 2',3'-cyclophospho-ribonucleotide-RNA + AMP + diphosphate. Its function is as follows. Catalyzes the conversion of 3'-phosphate to a 2',3'-cyclic phosphodiester at the end of RNA. The mechanism of action of the enzyme occurs in 3 steps: (A) adenylation of the enzyme by ATP; (B) transfer of adenylate to an RNA-N3'P to produce RNA-N3'PP5'A; (C) and attack of the adjacent 2'-hydroxyl on the 3'-phosphorus in the diester linkage to produce the cyclic end product. The biological role of this enzyme is unknown but it is likely to function in some aspects of cellular RNA processing. This is RNA 3'-terminal phosphate cyclase from Methanosarcina barkeri (strain Fusaro / DSM 804).